The following is a 238-amino-acid chain: MIAFIVLLSLAAVLQQSSGTVDFASESSNKGENQKQIVKKHNALRRSVKPPARNMLQMEWNSRAAQNAKRWAERCSFTHSPPSLRTVGKLRCGENLLQSSQPLPWSKVVQAWYDENKNFVYGIGAKPPGSVVGHYTQVVWYKSRLLGCASVKCSPTKYLYVCQYCPAGNIIGSQATPYKSGPRCADCPSACVKGLCTNPCKREDDYSNCKSLAEKNKCMEEWMKSKCPASCFCHNKII.

The N-terminal stretch at 1–19 (MIAFIVLLSLAAVLQQSSG) is a signal peptide. The propeptide occupies 20–27 (TVDFASES). The region spanning 39-164 (KKHNALRRSV…PTKYLYVCQY (126 aa)) is the SCP domain. 8 cysteine pairs are disulfide-bonded: Cys-75–Cys-153, Cys-92–Cys-165, Cys-148–Cys-162, Cys-184–Cys-191, Cys-187–Cys-196, Cys-200–Cys-233, Cys-209–Cys-227, and Cys-218–Cys-231. Positions 200-233 (CKREDDYSNCKSLAEKNKCMEEWMKSKCPASCFC) constitute a ShKT domain.

This sequence belongs to the CRISP family. Expressed by the venom gland.

It localises to the secreted. Functionally, blocks olfactory (CNGA2) and retinal (CNGA1) cyclic nucleotide-gated (CNG) ion channel currents. Does not inhibit retinal (CNGA3) currents. It forms high-affinity contacts with the pore turret region and most likely inhibits CNG channel current by blocking the external entrance to the transmembrane pore. Does not affect neither depolarization- nor caffeine-induced contraction arterial smooth muscle. The sequence is that of Cysteine-rich venom protein from Demansia vestigiata (Lesser black whip snake).